A 105-amino-acid chain; its full sequence is uncharacterized protein (105 aa).

The first 19 residues, 1–19 (MKLVFIFATAAIMGVVVYG), serve as a signal peptide directing secretion.

This is an uncharacterized protein from Magallana gigas (Pacific oyster).